Reading from the N-terminus, the 348-residue chain is Cell surface glycoprotein CD200 receptor 1 (348 aa).

A signal peptide spans 1–24; the sequence is MLCPWRTANLGLLLILTIFLVAEA. Topologically, residues 29–265 are extracellular; it reads QPNNSLMLQT…PVPGAKKSAK (237 aa). N-linked (GlcNAc...) asparagine glycans are attached at residues Asn31, Asn60, Asn69, Asn116, Asn122, Asn185, Asn218, Asn233, and Asn247. 2 cysteine pairs are disulfide-bonded: Cys83–Cys155 and Cys107–Cys123. The 92-residue stretch at 160 to 251 folds into the Ig-like C2-type domain; the sequence is PDGNFHRGYH…SHLTGNKSLY (92 aa). 2 disulfides stabilise this stretch: Cys190/Cys239 and Cys209/Cys227. A helical transmembrane segment spans residues 266 to 286; it reads LYIPYIILTIIILTIVGFIWL. Residues 287–348 are Cytoplasmic-facing; that stretch reads LKVNGCRKYK…SEVDTDLHTL (62 aa).

This sequence belongs to the CD200R family. CD200 and CD200R1 interact via their respective N-terminal Ig-like domains. Interacts with Human herpesvirus 8 vOX2 protein. In terms of assembly, (Microbial infection) Interacts with human herpesvirus 8/HHV-8 protein vOX2/K14. As to expression, expressed in granulocytes, monocytes, most T-cells, neutrophils, basophils and a subset of NK, NKT and B-cells (at protein level). Expressed in bone marrow, lymph nodes, spleen, lung, liver, spinal cord, kidney. Expressed in monocyte-derived dendritic and mast cells.

The protein localises to the cell membrane. It localises to the secreted. Functionally, inhibitory receptor for the CD200/OX2 cell surface glycoprotein. Limits inflammation by inhibiting the expression of pro-inflammatory molecules including TNF-alpha, interferons, and inducible nitric oxide synthase (iNOS) in response to selected stimuli. Also binds to HHV-8 K14 viral CD200 homolog with identical affinity and kinetics as the host CD200. The protein is Cell surface glycoprotein CD200 receptor 1 (CD200R1) of Homo sapiens (Human).